The primary structure comprises 223 residues: Type II restriction enzyme BglII (223 aa).

The Mg(2+) site is built by aspartate 84 and valine 94.

As to quaternary structure, homodimer. Mg(2+) is required as a cofactor.

The enzyme catalyses Endonucleolytic cleavage of DNA to give specific double-stranded fragments with terminal 5'-phosphates.. A P subtype restriction enzyme that recognizes the double-stranded sequence 5'-AGATCT-3' and cleaves after A-1. In Bacillus subtilis, this protein is Type II restriction enzyme BglII (bglIIR).